Reading from the N-terminus, the 101-residue chain is Citrate lyase acyl carrier protein (101 aa).

Ser14 carries the post-translational modification O-(phosphoribosyl dephospho-coenzyme A)serine.

Belongs to the CitD family. Oligomer with a subunit composition of (alpha,beta,gamma)6.

It localises to the cytoplasm. Functionally, covalent carrier of the coenzyme of citrate lyase. The chain is Citrate lyase acyl carrier protein from Lacticaseibacillus casei (strain BL23) (Lactobacillus casei).